The chain runs to 147 residues: Hemoglobin subunit beta-A/B (147 aa).

The Globin domain occupies 2-147 (EWTDAERSAI…VVNALKRQYH (146 aa)). Residues His-63 and His-92 each contribute to the heme b site.

Belongs to the globin family. As to quaternary structure, heterotetramer of two alpha chains and two beta chains. Red blood cells.

Its function is as follows. Involved in oxygen transport from gills to the various peripheral tissues. This Cyprinus carpio (Common carp) protein is Hemoglobin subunit beta-A/B.